The chain runs to 393 residues: MSIIKITDLNLLNKKVLIRSDLNVPIKNNKISSYARIHASLPTIKFALKNLAKVIVTSHLGRPTEGIYKKKFSLFPVFKYFKKILPETNIYFSQNLTECSSIKSGELIILENVRFNQGEKENSKILSKKYATLCDIFVMDAFGAIHRNEASTNGIIKYAKLACSGLLLESELKTLNSALTNPVRPMVAIVGGAKVSTKFKTLTTLAKISDTLIVGGGIANTFISIDHNIGKSLHDPKFIEQAKILKEKYNIFIPTDSRVSTTFTYDSIATIKSTSDIHANEEIMDFGDISIKNMINIIKKAKTILWNGPIGVFEFKNFSKGTEQLSKAIASSDAFSIAGGGDTLSVVEMFKVQNNISYLSTGGGSFLKFLEGNKFRIIELLEKHFNKFKNNNF.

Substrate is bound by residues 21 to 23 (DLN), Arg36, 59 to 62 (HLGR), Arg114, and Arg147. Residues Lys198, Glu314, and 340–343 (GGDT) contribute to the ATP site.

Belongs to the phosphoglycerate kinase family. Monomer.

Its subcellular location is the cytoplasm. The enzyme catalyses (2R)-3-phosphoglycerate + ATP = (2R)-3-phospho-glyceroyl phosphate + ADP. It functions in the pathway carbohydrate degradation; glycolysis; pyruvate from D-glyceraldehyde 3-phosphate: step 2/5. This Buchnera aphidicola subsp. Baizongia pistaciae (strain Bp) protein is Phosphoglycerate kinase.